The following is a 116-amino-acid chain: Toxin ICK-10 (116 aa).

A signal peptide spans 1–19; the sequence is MMKLYSLVIIATLAAAAFA. Disulfide bonds link cysteine 56–cysteine 71, cysteine 64–cysteine 77, cysteine 68–cysteine 113, and cysteine 70–cysteine 84.

It belongs to the neurotoxin 25 family. ICK-8 subfamily. Expressed by the venom gland.

It is found in the secreted. Ion channel inhibitor. The protein is Toxin ICK-10 of Trittame loki (Brush-footed trapdoor spider).